Reading from the N-terminus, the 165-residue chain is Phosphopantetheine adenylyltransferase (165 aa).

Serine 9 contributes to the substrate binding site. Residues 9–10 (SF) and histidine 17 contribute to the ATP site. Substrate contacts are provided by lysine 41, isoleucine 75, and arginine 89. Residues 90–92 (GVR), glutamate 100, and 125–131 (YLFVRSD) each bind ATP.

It belongs to the bacterial CoaD family. As to quaternary structure, homohexamer. Mg(2+) is required as a cofactor.

The protein localises to the cytoplasm. The catalysed reaction is (R)-4'-phosphopantetheine + ATP + H(+) = 3'-dephospho-CoA + diphosphate. It participates in cofactor biosynthesis; coenzyme A biosynthesis; CoA from (R)-pantothenate: step 4/5. Reversibly transfers an adenylyl group from ATP to 4'-phosphopantetheine, yielding dephospho-CoA (dPCoA) and pyrophosphate. The chain is Phosphopantetheine adenylyltransferase from Borrelia hermsii (strain HS1 / DAH).